The following is a 246-amino-acid chain: 1-(5-phosphoribosyl)-5-[(5-phosphoribosylamino)methylideneamino] imidazole-4-carboxamide isomerase (246 aa).

Asp-8 acts as the Proton acceptor in catalysis. The active-site Proton donor is Asp-131.

This sequence belongs to the HisA/HisF family.

It is found in the cytoplasm. It carries out the reaction 1-(5-phospho-beta-D-ribosyl)-5-[(5-phospho-beta-D-ribosylamino)methylideneamino]imidazole-4-carboxamide = 5-[(5-phospho-1-deoxy-D-ribulos-1-ylimino)methylamino]-1-(5-phospho-beta-D-ribosyl)imidazole-4-carboxamide. The protein operates within amino-acid biosynthesis; L-histidine biosynthesis; L-histidine from 5-phospho-alpha-D-ribose 1-diphosphate: step 4/9. This chain is 1-(5-phosphoribosyl)-5-[(5-phosphoribosylamino)methylideneamino] imidazole-4-carboxamide isomerase, found in Bordetella petrii (strain ATCC BAA-461 / DSM 12804 / CCUG 43448).